The primary structure comprises 827 residues: MKRVCLPSSSEDSDDNGSLSTSWSQHSRSLPSFRHEDRKPSEVFRTDLITAMKLHDSNQLNPEDYYVLADPWRQEWEKGVQVPVNPEFIPETIARVIAEKDKVVTFTRPRKYIHSSGSEPPEVGYVDIQTLADAVCRYDLNEMDVAWLQLINEEFKEMGMQQLDEYTMEQVLEEFEKKCYDKMNHAIETEEGLGIEYDEDVVCDVCQSPDGEDGNEMVFCDKCNICVHQACYGILKVPEGSWLCRTCALGVQPKCLLCPKKGGAMKPTRSGTKWVHVSCALWIPEVSIGSPEKMEPITKVSHIPSNRWALLCSLCNEKVGACIQCSIKNCRTAFHVTCAFDHGLEMKTILTQEDEVKFKSYCPKHGSTKKPEDSHFCRSASDGKDTCEASPTFLGGLRVLEASQQNVKHGSQRKLKLQQLEDDFYSFVDVHDISQALKIPLDVTEYIYQYWKLRRKANFNEPLITPKKDEEDNLAKKEQDVLIRRLQLFTHLRQDLERVRNLTYMVTRREKMKRSVCRVQEQIFNLYTKISEQEKDLGFPLENGLLFNTQPSNPDAPKIEDLKWHSAFFRKRLGSSLRCSMKDSHKKSRERIIGKSLDTEILLTDRKKEGQTSDVSFPLEKTVAKIKPVQQKNGGSFPEHRKRRDSRTQGDTKFDSKEKPLRQQHRPAKHTEPPERPAEKKRALSQCGGKSATASSNKKQCSSSLPRYSGSLIKIHCNRPSVKVPTSPIKNWGGFRIPKKGEKVQPGSMETCQPNLNCQFLGQVSKKGRTKEKVKLDNDNDGYTPDAEMSDSESEPTDKCRLQRLTSSSSLSRGYETDFIRRSILAS.

Positions 1-35 are disordered; sequence MKRVCLPSSSEDSDDNGSLSTSWSQHSRSLPSFRH. Residues 16–30 are compositionally biased toward polar residues; the sequence is NGSLSTSWSQHSRSL. Residues 200 to 250 form a PHD-type 1 zinc finger; that stretch reads DVVCDVCQSPDGEDGNEMVFCDKCNICVHQACYGILKVPEGSWLCRTCALG. The segment at 252–286 adopts a C2HC pre-PHD-type zinc-finger fold; it reads QPKCLLCPKKGGAMKPTRSGTKWVHVSCALWIPEV. The segment at 310–366 adopts a PHD-type 2 zinc-finger fold; that stretch reads LLCSLCNEKVGACIQCSIKNCRTAFHVTCAFDHGLEMKTILTQEDEVKFKSYCPKHG. Disordered stretches follow at residues 622 to 705 and 769 to 810; these read TVAK…SSSL and RTKE…SSSS. Composition is skewed to basic and acidic residues over residues 646-661 and 669-682; these read SRTQ…EKPL and KHTE…EKKR. The span at 692 to 705 shows a compositional bias: polar residues; that stretch reads ATASSNKKQCSSSL.

The protein belongs to the JADE family. As to quaternary structure, component of the HBO1 complex composed.

It is found in the nucleus. It localises to the chromosome. Its subcellular location is the cytoplasm. The protein resides in the cytoskeleton. The protein localises to the cilium basal body. Scaffold subunit of some HBO1 complexes, which have a histone H4 acetyltransferase activity. Plays a key role in HBO1 complex by directing KAT7/HBO1 specificity towards histone H4 acetylation (H4K5ac, H4K8ac and H4K12ac), regulating DNA replication initiation, regulating DNA replication initiation. The protein is Protein Jade-1 (jade1) of Xenopus laevis (African clawed frog).